Reading from the N-terminus, the 244-residue chain is Small ribosomal subunit protein uS2 (244 aa).

This sequence belongs to the universal ribosomal protein uS2 family.

The chain is Small ribosomal subunit protein uS2 from Buchnera aphidicola subsp. Schizaphis graminum (strain Sg).